The chain runs to 189 residues: Peptide deformylase (189 aa).

Residues C98 and H140 each contribute to the Fe cation site. E141 is an active-site residue. Residue H144 coordinates Fe cation.

It belongs to the polypeptide deformylase family. The cofactor is Fe(2+).

It carries out the reaction N-terminal N-formyl-L-methionyl-[peptide] + H2O = N-terminal L-methionyl-[peptide] + formate. Removes the formyl group from the N-terminal Met of newly synthesized proteins. Requires at least a dipeptide for an efficient rate of reaction. N-terminal L-methionine is a prerequisite for activity but the enzyme has broad specificity at other positions. The sequence is that of Peptide deformylase from Porphyromonas gingivalis (strain ATCC 33277 / DSM 20709 / CIP 103683 / JCM 12257 / NCTC 11834 / 2561).